We begin with the raw amino-acid sequence, 840 residues long: Lon protease homolog 2, peroxisomal (840 aa).

The region spanning 13 to 222 (LPLLCTHDGV…KALPLLTRQI (210 aa)) is the Lon N-terminal domain. Residue 375-382 (GPPGVGKT) participates in ATP binding. The disordered stretch occupies residues 583 to 606 (QKVSRSEAPTEQHAEQNTDSKVED). The span at 584–606 (KVSRSEAPTEQHAEQNTDSKVED) shows a compositional bias: basic and acidic residues. In terms of domain architecture, Lon proteolytic spans 641 to 825 (LTLPGVAIGL…DEVLNAAFDG (185 aa)). Residues serine 731 and lysine 774 contribute to the active site. The Microbody targeting signal motif lies at 838–840 (SKL).

Belongs to the peptidase S16 family.

The protein localises to the peroxisome matrix. It catalyses the reaction Hydrolysis of proteins in presence of ATP.. Its function is as follows. ATP-dependent serine protease that mediates the selective degradation of misfolded and unassembled polypeptides in the peroxisomal matrix. Necessary for type 2 peroxisome targeting signal (PTS2)-containing protein processing and facilitates peroxisome matrix protein import. This Danio rerio (Zebrafish) protein is Lon protease homolog 2, peroxisomal (lonp2).